We begin with the raw amino-acid sequence, 247 residues long: Carboxy-S-adenosyl-L-methionine synthase (247 aa).

Residues tyrosine 40, 65–67 (GSS), 90–91 (DN), 122–123 (DI), asparagine 137, and arginine 204 contribute to the S-adenosyl-L-methionine site.

This sequence belongs to the class I-like SAM-binding methyltransferase superfamily. Cx-SAM synthase family. As to quaternary structure, homodimer.

It catalyses the reaction prephenate + S-adenosyl-L-methionine = carboxy-S-adenosyl-L-methionine + 3-phenylpyruvate + H2O. Catalyzes the conversion of S-adenosyl-L-methionine (SAM) to carboxy-S-adenosyl-L-methionine (Cx-SAM). This Pseudomonas savastanoi pv. phaseolicola (strain 1448A / Race 6) (Pseudomonas syringae pv. phaseolicola (strain 1448A / Race 6)) protein is Carboxy-S-adenosyl-L-methionine synthase.